A 459-amino-acid polypeptide reads, in one-letter code: MKDIKTYDNKNILVLGLGKSGFAVSELLLKLGANLTLNDKADLDKNEKAQELKAKGVRVIGGYHPVDLLEEEHFDYLVKNPGIPYENPMVKKAEELDIPIITEPEVALSCSDAPYVCITGSNGKTTTVMLTQRILDHHLQKTGHHAYAVGNIGVPISEVVPKATKDDILVVEISSFQLLGVTDIKPKVAAIVDIYNNVHLDYHKTFENYVDAKLNVTRTQNSDDYFIANFDQKDILAKEKEVSPAKMQTFSETDHNADYFIGDEYLESQDEKIMKIADIKLPGVHNLQNSLVAIAIAKLMGADNEDIAAVLSTFTGAKHRLQYVTTLDGRKIYNDSKSTNIEAATVAIPAFKEPEVLIAGGLDRGFTFDDLVPLFKKHVKSIVLYGETKYLLADAARKAGIKEIVIVNTLQEAVPRAYELTEPGDVILFSPACASWDQFRTFEERGDYFVRFVEELKTK.

120–126 contributes to the ATP binding site; that stretch reads GSNGKTT.

This sequence belongs to the MurCDEF family.

The protein localises to the cytoplasm. It catalyses the reaction UDP-N-acetyl-alpha-D-muramoyl-L-alanine + D-glutamate + ATP = UDP-N-acetyl-alpha-D-muramoyl-L-alanyl-D-glutamate + ADP + phosphate + H(+). Its pathway is cell wall biogenesis; peptidoglycan biosynthesis. Its function is as follows. Cell wall formation. Catalyzes the addition of glutamate to the nucleotide precursor UDP-N-acetylmuramoyl-L-alanine (UMA). In Lactobacillus acidophilus (strain ATCC 700396 / NCK56 / N2 / NCFM), this protein is UDP-N-acetylmuramoylalanine--D-glutamate ligase.